The sequence spans 212 residues: MNARVGVFGGTFDPVHHAHLRMARAFADELALDEVRLIPAGQPYHRLEGPHASAAQRLDMVKLAIAADARLAVDEREIRRARPAYTVDTLRELRAELGDAAELWFLIGGDSLAALSSWKDWRKLFRLANLAVAMRPGFDPAALPPEVFQEWQARQVSDFSNRTASGTIRPLALPPLDLSATRLRARLAADEPVDGLIDPAVLAYIRRQRLYR.

The protein belongs to the NadD family.

It carries out the reaction nicotinate beta-D-ribonucleotide + ATP + H(+) = deamido-NAD(+) + diphosphate. Its pathway is cofactor biosynthesis; NAD(+) biosynthesis; deamido-NAD(+) from nicotinate D-ribonucleotide: step 1/1. Its function is as follows. Catalyzes the reversible adenylation of nicotinate mononucleotide (NaMN) to nicotinic acid adenine dinucleotide (NaAD). The sequence is that of Probable nicotinate-nucleotide adenylyltransferase from Chromobacterium violaceum (strain ATCC 12472 / DSM 30191 / JCM 1249 / CCUG 213 / NBRC 12614 / NCIMB 9131 / NCTC 9757 / MK).